Consider the following 429-residue polypeptide: MMNPRRLPPLPSSTSSASAADDMDPRVWRRLPQPLVDRILACLPTPSFLRLRAACRRFYHLLFSSPFLHSHLLLSPHLPFFAFVVPAAGHLLLLDPTATASWSRLPLPLPPVAGGPAAFSPAAASAGLLAFLSDASGHKTLLLANPITRLLAALPISPTPRLSPTVGLAAGPTSIIAVVAGDDLVSPFAVKNISADTFVADAASVPPSGFWAPSSLLPRLSSLDPRAGMAFASGRFYCMSSSPFAVLVFDVAENVWSKVQPPMRRFLRSPALVELGGGREGAARVALVSAVEKSRLSVPRSVRLWTLRGGGGGGGGGAWTEVARMPPEVHAQFAAAEGGRGFECAAHGDYVVLAPRGPVAQAPTSALVFDSRRDEWRWAPPCPYVVVAHHGGAGAAGFRVFAYEPRLATPAIGLLDATAPVALHGMHDG.

Residues 1–11 (MMNPRRLPPLP) are compositionally biased toward pro residues. Residues 1 to 21 (MMNPRRLPPLPSSTSSASAAD) form a disordered region. One can recognise an F-box domain in the interval 25–71 (PRVWRRLPQPLVDRILACLPTPSFLRLRAACRRFYHLLFSSPFLHSH). The next 2 helical transmembrane spans lie at 72-92 (LLLSPHLPFFAFVVPAAGHLL) and 112-132 (VAGGPAAFSPAAASAGLLAFL). Kelch repeat units lie at residues 229–277 (MAFA…ELGG), 284–339 (RVAL…AEGG), and 350–397 (YVVL…GAAG).

In terms of assembly, part of a putative SCF (ASK/Cullin/F-box) ubiquitin ligase complex. Interacts with FL/APO2. As to expression, expressed in apical meristems and the lateral organ primordia throughout development. Expressed in seedlings, roots, leaves, shoot apical meristem (SAM), developing panicles, and, at lower levels, in developing seeds.

Its subcellular location is the membrane. The protein operates within protein modification; protein ubiquitination. Component of SCF(ASK-cullin-F-box) E3 ubiquitin ligase complexes, which may mediate the ubiquitination and subsequent proteasomal degradation of target proteins. Together with FL/APO2, involved in the temporal regulation of meristem identity during both vegetative and reproductive developments in an APO2-dependent manner. Promotes spikelet formation by suppressing the precocious conversion of inflorescence meristems to spikelet meristems, probably via a positive regulation of class-C floral homeotic genes, but not of class-B genes, and through the control of cell proliferation in meristems. Mediates culm development and strength/diameter enhancement at internodes. Required for the regulation of the plastochron, floral organ identity, and floral determinacy. Controls the number of primary rachis branches (PRBs). May trigger the formation of vascular bundle systems which, consequently, promote carbohydrate translocation to panicles. Involved in ozone-induced grain yield regulation. This chain is Protein ABERRANT PANICLE ORGANIZATION 1, found in Oryza sativa subsp. japonica (Rice).